The primary structure comprises 427 residues: Serine--tRNA ligase (427 aa).

Residue 231–233 (TAE) coordinates L-serine. 262 to 264 (RSE) contributes to the ATP binding site. Glu-285 contacts L-serine. 349-352 (EISS) lines the ATP pocket. Ser-385 contributes to the L-serine binding site.

It belongs to the class-II aminoacyl-tRNA synthetase family. Type-1 seryl-tRNA synthetase subfamily. As to quaternary structure, homodimer. The tRNA molecule binds across the dimer.

The protein resides in the cytoplasm. The enzyme catalyses tRNA(Ser) + L-serine + ATP = L-seryl-tRNA(Ser) + AMP + diphosphate + H(+). It carries out the reaction tRNA(Sec) + L-serine + ATP = L-seryl-tRNA(Sec) + AMP + diphosphate + H(+). It participates in aminoacyl-tRNA biosynthesis; selenocysteinyl-tRNA(Sec) biosynthesis; L-seryl-tRNA(Sec) from L-serine and tRNA(Sec): step 1/1. Catalyzes the attachment of serine to tRNA(Ser). Is also able to aminoacylate tRNA(Sec) with serine, to form the misacylated tRNA L-seryl-tRNA(Sec), which will be further converted into selenocysteinyl-tRNA(Sec). The sequence is that of Serine--tRNA ligase from Listeria innocua serovar 6a (strain ATCC BAA-680 / CLIP 11262).